Consider the following 240-residue polypeptide: RNA transcription, translation and transport factor protein (240 aa).

The protein belongs to the RTRAF family. In terms of assembly, homodimer. Component of a tRNA-splicing ligase complex.

Its subcellular location is the nucleus. It localises to the cytoplasm. The protein localises to the cytosol. It is found in the perinuclear region. The protein resides in the cytoskeleton. Its subcellular location is the microtubule organizing center. It localises to the centrosome. Its function is as follows. RNA-binding protein involved in modulation of mRNA transcription by Polymerase II. Component of the tRNA-splicing ligase complex. This Xenopus laevis (African clawed frog) protein is RNA transcription, translation and transport factor protein.